The primary structure comprises 120 residues: Ribosome-binding factor A (120 aa).

It belongs to the RbfA family. As to quaternary structure, monomer. Binds 30S ribosomal subunits, but not 50S ribosomal subunits or 70S ribosomes.

It is found in the cytoplasm. One of several proteins that assist in the late maturation steps of the functional core of the 30S ribosomal subunit. Associates with free 30S ribosomal subunits (but not with 30S subunits that are part of 70S ribosomes or polysomes). Required for efficient processing of 16S rRNA. May interact with the 5'-terminal helix region of 16S rRNA. This chain is Ribosome-binding factor A, found in Rickettsia rickettsii (strain Iowa).